A 104-amino-acid chain; its full sequence is Inclusion membrane protein F (104 aa).

2 consecutive transmembrane segments (helical) span residues L39–A59 and L70–I90.

Its subcellular location is the secreted. It is found in the host vacuole. It localises to the host pathogen-containing vacuole. The protein localises to the host pathogen-containing vacuole membrane. Inclusion membrane protein probably involved in early modification events of the chlamydial inclusion. The polypeptide is Inclusion membrane protein F (Chlamydia trachomatis serovar L2 (strain ATCC VR-902B / DSM 19102 / 434/Bu)).